Reading from the N-terminus, the 424-residue chain is Hemagglutinin-esterase (424 aa).

An N-terminal signal peptide occupies residues 1–16 (MFLLPRFVLVSCIIGS). Residues 7–127 (FVLVSCIIGS…SNDIWMQNKG (121 aa)) are esterase domain 1. Over 17-392 (LGFDNPPTNV…PICVYDPLPI (376 aa)) the chain is Virion surface. Residue S40 is the Nucleophile of the active site. C44 and C65 are disulfide-bonded. Residues N54, N89, N153, N236, and N301 are each glycosylated (N-linked (GlcNAc...) asparagine; by host). 3 disulfides stabilise this stretch: C113/C162, C197/C276, and C205/C249. Positions 128-266 (LFYTQLYKNM…GNYLAISNEL (139 aa)) are receptor binding. Residues 267–379 (LLTVPTKAIC…RCPTAADINT (113 aa)) form an esterase domain 2 region. C307 and C312 form a disulfide bridge. The N-linked (GlcNAc...) asparagine; by host glycan is linked to N316. Active-site charge relay system residues include D326 and H329. C347 and C371 are joined by a disulfide. N358 is a glycosylation site (N-linked (GlcNAc...) asparagine; by host). A helical membrane pass occupies residues 393-413 (ILLGILLGVAVIIIVVLLLYF). At 414 to 424 (MVDNGTRLHDA) the chain is on the intravirion side. N-linked (GlcNAc...) asparagine; by host glycosylation is present at N417.

It belongs to the influenza type C/coronaviruses hemagglutinin-esterase family. In terms of assembly, homodimer; disulfide-linked. Forms a complex with the M protein in the pre-Golgi. Associates then with S-M complex to form a ternary complex S-M-HE. N-glycosylated in the host RER.

Its subcellular location is the virion membrane. It is found in the host cell membrane. It catalyses the reaction N-acetyl-9-O-acetylneuraminate + H2O = N-acetylneuraminate + acetate + H(+). The enzyme catalyses N-acetyl-4-O-acetylneuraminate + H2O = N-acetylneuraminate + acetate + H(+). In terms of biological role, structural protein that makes short spikes at the surface of the virus. Contains receptor binding and receptor-destroying activities. Mediates de-O-acetylation of N-acetyl-4-O-acetylneuraminic acid, which is probably the receptor determinant recognized by the virus on the surface of erythrocytes and susceptible cells. This receptor-destroying activity is important for virus release as it probably helps preventing self-aggregation and ensures the efficient spread of the progeny virus from cell to cell. May serve as a secondary viral attachment protein for initiating infection, the spike protein being the major one. May become a target for both the humoral and the cellular branches of the immune system. This is Hemagglutinin-esterase from Bovine coronavirus (strain LSU-94LSS-051) (BCoV-LSU).